The sequence spans 204 residues: Probable nicotinate-nucleotide adenylyltransferase (204 aa).

It belongs to the NadD family.

It carries out the reaction nicotinate beta-D-ribonucleotide + ATP + H(+) = deamido-NAD(+) + diphosphate. Its pathway is cofactor biosynthesis; NAD(+) biosynthesis; deamido-NAD(+) from nicotinate D-ribonucleotide: step 1/1. In terms of biological role, catalyzes the reversible adenylation of nicotinate mononucleotide (NaMN) to nicotinic acid adenine dinucleotide (NaAD). This Dehalococcoides mccartyi (strain ATCC BAA-2266 / KCTC 15142 / 195) (Dehalococcoides ethenogenes (strain 195)) protein is Probable nicotinate-nucleotide adenylyltransferase.